We begin with the raw amino-acid sequence, 274 residues long: Orotidine 5'-phosphate decarboxylase (274 aa).

Residues Asp-40, Lys-62–His-64, Asp-93–Thr-102, Tyr-227, and Arg-245 each bind substrate. The active-site Proton donor is Lys-95.

Belongs to the OMP decarboxylase family.

It carries out the reaction orotidine 5'-phosphate + H(+) = UMP + CO2. It functions in the pathway pyrimidine metabolism; UMP biosynthesis via de novo pathway; UMP from orotate: step 2/2. This Coccidioides immitis (strain RS) (Valley fever fungus) protein is Orotidine 5'-phosphate decarboxylase (URA3).